Here is a 122-residue protein sequence, read N- to C-terminus: Fluoride-specific ion channel FluC (122 aa).

4 helical membrane passes run 5–25 (FLIGIGGFTGAVLRYVISGII), 29–49 (FGIPTGTLMVNLIGSFIVGFL), 65–85 (FIITGFCGALTTFSTFSYESF), and 93–113 (FIKSGINILTNVTGCISMIYF). 2 residues coordinate Na(+): G72 and T75.

This sequence belongs to the fluoride channel Fluc/FEX (TC 1.A.43) family.

The protein localises to the cell membrane. It carries out the reaction fluoride(in) = fluoride(out). Na(+) is not transported, but it plays an essential structural role and its presence is essential for fluoride channel function. In terms of biological role, fluoride-specific ion channel. Important for reducing fluoride concentration in the cell, thus reducing its toxicity. This Methanococcus vannielii (strain ATCC 35089 / DSM 1224 / JCM 13029 / OCM 148 / SB) protein is Fluoride-specific ion channel FluC.